An 85-amino-acid chain; its full sequence is Large ribosomal subunit protein bL27 (85 aa).

Residues 1 to 21 (MAHKKAGGSTRNGRDSNAKRL) form a disordered region.

The protein belongs to the bacterial ribosomal protein bL27 family.

This Erwinia tasmaniensis (strain DSM 17950 / CFBP 7177 / CIP 109463 / NCPPB 4357 / Et1/99) protein is Large ribosomal subunit protein bL27.